Here is a 727-residue protein sequence, read N- to C-terminus: Glucans biosynthesis glucosyltransferase H (727 aa).

A disordered region spans residues 18–38 (SAMPNERPGAMEPQNLSKMPE). A run of 7 helical transmembrane segments spans residues 58 to 78 (FLVV…MGAV), 97 to 117 (VNFC…LILL), 278 to 298 (LQQF…GWWV), 408 to 428 (IMAY…LMLA), 460 to 480 (LFYI…LLLL), 496 to 516 (IFSV…MMFI), and 572 to 592 (LLAW…ISAW).

Belongs to the glycosyltransferase 2 family. OpgH subfamily.

The protein localises to the cell inner membrane. It functions in the pathway glycan metabolism; osmoregulated periplasmic glucan (OPG) biosynthesis. In terms of biological role, involved in the biosynthesis of osmoregulated periplasmic glucans (OPGs). This Shewanella baltica (strain OS185) protein is Glucans biosynthesis glucosyltransferase H.